The chain runs to 89 residues: Small ribosomal subunit protein uS19 (89 aa).

Belongs to the universal ribosomal protein uS19 family.

In terms of biological role, protein S19 forms a complex with S13 that binds strongly to the 16S ribosomal RNA. The sequence is that of Small ribosomal subunit protein uS19 from Bacteroides fragilis (strain YCH46).